The chain runs to 60 residues: Large ribosomal subunit protein bL32c (60 aa).

This sequence belongs to the bacterial ribosomal protein bL32 family.

Its subcellular location is the plastid. It localises to the chloroplast. This chain is Large ribosomal subunit protein bL32c, found in Psilotum nudum (Whisk fern).